The following is a 58-amino-acid chain: Ikitoxin (58 aa).

The 56-residue stretch at 3 to 58 (VPGNYPLDKDGNTYKCFLLGENEECLNVCKLHGVQYGYCYASKCWCEYLEDDKDSV) folds into the LCN-type CS-alpha/beta domain. 3 disulfide bridges follow: C18–C41, C27–C46, and C31–C48.

Expressed by the venom gland.

The protein resides in the secreted. Its function is as follows. Beta toxins bind voltage-independently at site-4 of sodium channels (Nav) and shift the voltage of activation toward more negative potentials thereby affecting sodium channel activation and promoting spontaneous and repetitive firing. Does not produce effect when administered to blowfly and cabbage looper larvae. In mice, does not produce convulsions, tremors, increased ventilation nor death. The sequence is that of Ikitoxin from Parabuthus transvaalicus (Transvaal thick-tailed scorpion).